The following is an 81-amino-acid chain: MIDVSSQRVNVQRPLDALGNSLNSPVIIKLKGDREFRGVLKSFDLHMNLVLNDAEELEDGEVTRRLGTVLIRGDNIVYISP.

The Sm domain occupies 13 to 81 (RPLDALGNSL…RGDNIVYISP (69 aa)).

The protein belongs to the snRNP Sm proteins family.

The chain is Putative snRNP Sm-like protein from Methanothermobacter thermautotrophicus (strain ATCC 29096 / DSM 1053 / JCM 10044 / NBRC 100330 / Delta H) (Methanobacterium thermoautotrophicum).